A 105-amino-acid chain; its full sequence is DNA-binding protein HU (105 aa).

Belongs to the bacterial histone-like protein family.

Its function is as follows. Histone-like DNA-binding protein which is capable of wrapping DNA to stabilize it, and thus to prevent its denaturation under extreme environmental conditions. The protein is DNA-binding protein HU (hup) of Treponema pallidum (strain Nichols).